A 405-amino-acid chain; its full sequence is Multifunctional CCA protein (405 aa).

The ATP site is built by Gly-8 and Arg-11. CTP-binding residues include Gly-8 and Arg-11. Asp-21 and Asp-23 together coordinate Mg(2+). Positions 91, 137, and 140 each coordinate ATP. CTP-binding residues include Arg-91, Arg-137, and Arg-140. In terms of domain architecture, HD spans 225–326 (TGVHAMLVLD…LRLLRECDAL (102 aa)).

This sequence belongs to the tRNA nucleotidyltransferase/poly(A) polymerase family. Bacterial CCA-adding enzyme type 1 subfamily. As to quaternary structure, monomer. Can also form homodimers and oligomers. Requires Mg(2+) as cofactor. Ni(2+) is required as a cofactor.

The catalysed reaction is a tRNA precursor + 2 CTP + ATP = a tRNA with a 3' CCA end + 3 diphosphate. It carries out the reaction a tRNA with a 3' CCA end + 2 CTP + ATP = a tRNA with a 3' CCACCA end + 3 diphosphate. In terms of biological role, catalyzes the addition and repair of the essential 3'-terminal CCA sequence in tRNAs without using a nucleic acid template. Adds these three nucleotides in the order of C, C, and A to the tRNA nucleotide-73, using CTP and ATP as substrates and producing inorganic pyrophosphate. tRNA 3'-terminal CCA addition is required both for tRNA processing and repair. Also involved in tRNA surveillance by mediating tandem CCA addition to generate a CCACCA at the 3' terminus of unstable tRNAs. While stable tRNAs receive only 3'-terminal CCA, unstable tRNAs are marked with CCACCA and rapidly degraded. This is Multifunctional CCA protein from Laribacter hongkongensis (strain HLHK9).